The chain runs to 125 residues: MAEKPPYVKFEVPEELANKVYELVRKARETGKIRKGTNETTKAVERGQAKLVIIAENVNPPEIVMHLPALCEEKGVPYVYVPSKEELGKAAGINVSAASAAIIDAGEAKDLLEEIIRSVQELKAK.

Belongs to the eukaryotic ribosomal protein eL8 family. Part of the 50S ribosomal subunit. Probably part of the RNase P complex.

It is found in the cytoplasm. Functionally, multifunctional RNA-binding protein that recognizes the K-turn motif in ribosomal RNA, the RNA component of RNase P, box H/ACA, box C/D and box C'/D' sRNAs. This Nanoarchaeum equitans (strain Kin4-M) protein is Large ribosomal subunit protein eL8.